A 189-amino-acid chain; its full sequence is Isopentenyl-diphosphate Delta-isomerase (189 aa).

His27 and His34 together coordinate Mn(2+). Residues 32–171 (PLHFAFSTYI…PFVFSPWMVD (140 aa)) enclose the Nudix hydrolase domain. Cys69 is an active-site residue. His71 contacts Mn(2+). Glu89 contacts Mg(2+). Residues Glu119 and Glu121 each contribute to the Mn(2+) site. Residue Glu121 is part of the active site.

It belongs to the IPP isomerase type 1 family. The cofactor is Mg(2+). Mn(2+) is required as a cofactor.

The protein localises to the cytoplasm. It carries out the reaction isopentenyl diphosphate = dimethylallyl diphosphate. It participates in isoprenoid biosynthesis; dimethylallyl diphosphate biosynthesis; dimethylallyl diphosphate from isopentenyl diphosphate: step 1/1. Functionally, catalyzes the 1,3-allylic rearrangement of the homoallylic substrate isopentenyl (IPP) to its highly electrophilic allylic isomer, dimethylallyl diphosphate (DMAPP). The sequence is that of Isopentenyl-diphosphate Delta-isomerase from Corynebacterium glutamicum (strain R).